The chain runs to 548 residues: Lysine--tRNA ligase (548 aa).

Positions 52-60 (PSGLPHIGT) match the 'HIGH' region motif. Residues 300 to 304 (KISKS) carry the 'KMSKS' region motif. Lys-303 contributes to the ATP binding site.

Belongs to the class-I aminoacyl-tRNA synthetase family.

It is found in the cytoplasm. The catalysed reaction is tRNA(Lys) + L-lysine + ATP = L-lysyl-tRNA(Lys) + AMP + diphosphate. This chain is Lysine--tRNA ligase, found in Mesorhizobium japonicum (strain LMG 29417 / CECT 9101 / MAFF 303099) (Mesorhizobium loti (strain MAFF 303099)).